We begin with the raw amino-acid sequence, 496 residues long: Sodium/sialic acid symporter SiaT (496 aa).

Residues 1–7 (MQLHDFG) are Periplasmic-facing. A helical transmembrane segment spans residues 8–29 (FINYAVLFGYLAAMLLVGVYFS). The Cytoplasmic portion of the chain corresponds to 30–46 (KRQKTADDYFRGGGRVP). Residues 47–59 (GWAAGVSVFATTL) form a helical membrane-spanning segment. A Na(+)-binding site is contributed by Ala56. Thr58 is an N-acetyl-alpha-neuraminate binding site. Leu59 serves as a coordination point for Na(+). Ser60, Thr63, and Gln82 together coordinate N-acetyl-alpha-neuraminate. Over 60–76 (SSITFMSIPAKAYTSDW) the chain is Periplasmic. A helical transmembrane segment spans residues 77–92 (TFIIGQYLAIAILPLV). Residues 93 to 116 (FYFYIPFFRKLKITSAYEYLEARF) are Cytoplasmic-facing. Residues 117–144 (DVRSRLFASLSFMLFHIGRVAIITYLTV) form a helical membrane-spanning segment. Position 135 (Arg135) interacts with N-acetyl-alpha-neuraminate. Residues 145 to 154 (LALRPFMGID) are Periplasmic-facing. The chain crosses the membrane as a helical span at residues 155–172 (PVVLIVLISLLCIIYTWM). At 173–174 (GG) the chain is on the cytoplasmic side. The chain crosses the membrane as a helical span at residues 175-199 (IEGVIWTDVIQGLLLSGGAVLIFIM). Asp182 serves as a coordination point for Na(+). At 200 to 235 (ICFKVDGGISEIFTTTAQADKFFPTTQWRWSWTDST) the chain is on the periplasmic side. Residues 236–252 (IPVLMIGFLFANIQQFT) traverse the membrane as a helical segment. Over 253-272 (ASQDVVQRYIVTDSIKETKR) the chain is Cytoplasmic. Residues 273-292 (TLITNAKLVAIIPIFFFAIG) form a helical membrane-spanning segment. Residues 293–325 (SALFVYYQQNPSLLPAGFNTGGILPLFIVTEMP) lie on the Periplasmic side of the membrane. A helical transmembrane segment spans residues 326 to 356 (IGIAGLIIAAIFAAAQSSISSSLNSISSCFN). Positions 339, 342, 343, 345, and 346 each coordinate Na(+). The Cytoplasmic portion of the chain corresponds to 357–374 (SDIYTRLSKSSPSPEQKM). Residues 375 to 396 (KVAKLVIIVAGIFSSLAAIWLV) traverse the membrane as a helical segment. The Periplasmic portion of the chain corresponds to 397–403 (LSDEAEI). The chain crosses the membrane as a helical span at residues 404–427 (WDAFNSLIGLMGGPMTGLFMLGIF). At 428–432 (VKRAN) the chain is on the cytoplasmic side. The helical transmembrane segment at 433–453 (AGSAVVGIIVSIIAVLAARYG) threads the bilayer. The Periplasmic portion of the chain corresponds to 454-457 (SDLN). Residues 458 to 479 (FFFYGVIGSMSVVIAGTITAPL) form a helical membrane-spanning segment. Residues 480–496 (FAPAKQLSLDDSETSEN) lie on the Cytoplasmic side of the membrane.

It belongs to the sodium:solute symporter (SSF) (TC 2.A.21) family.

Its subcellular location is the cell inner membrane. It carries out the reaction N-acetyl-alpha-neuraminate(out) + 2 Na(+)(out) = N-acetyl-alpha-neuraminate(in) + 2 Na(+)(in). Its activity is regulated as follows. Both Na(+) sites regulate Neu5Ac transport. The binding energy of the second Na(+) ion may be used to allosterically stabilize the substrate without directly coordinating it. In the absence of external Na(+), the rate is reduced by 78%. Symporter that uses the Na(+) gradient as the driving force for the uptake of the sialic acid N-acetylneuraminic acid (Neu5Ac). It allows the use of host-derived Neu5Ac as an energy source by P.mirabilis. Also binds N-glycolylneuraminic acid (Neu5Gc) and ketodeoxynonulosonic acid (KDN). Shows the highest affinity for Neu5Ac and Neu5Gc, which commonly occupy the terminal non-reducing position of mammalian cell surface glycoconjugates. In Proteus mirabilis (strain HI4320), this protein is Sodium/sialic acid symporter SiaT.